The following is a 482-amino-acid chain: Adenylosuccinate lyase (482 aa).

Substrate contacts are provided by residues Arg-14–Tyr-15, Arg-82–Asp-84, and Thr-108–Ser-109. The active-site Proton donor/acceptor is the His-156. Residue Lys-196 forms a Glycyl lysine isopeptide (Lys-Gly) (interchain with G-Cter in ubiquitin) linkage. Gln-238 is a substrate binding site. The Proton donor/acceptor role is filled by Ser-286. Residues Arg-300, Arg-326, Ser-331, and Arg-335 each contribute to the substrate site.

The protein belongs to the lyase 1 family. Adenylosuccinate lyase subfamily. In terms of assembly, homotetramer. Residues from neighboring subunits contribute catalytic and substrate-binding residues to each active site.

It carries out the reaction N(6)-(1,2-dicarboxyethyl)-AMP = fumarate + AMP. It catalyses the reaction (2S)-2-[5-amino-1-(5-phospho-beta-D-ribosyl)imidazole-4-carboxamido]succinate = 5-amino-1-(5-phospho-beta-D-ribosyl)imidazole-4-carboxamide + fumarate. The protein operates within purine metabolism; AMP biosynthesis via de novo pathway; AMP from IMP: step 2/2. It participates in purine metabolism; IMP biosynthesis via de novo pathway; 5-amino-1-(5-phospho-D-ribosyl)imidazole-4-carboxamide from 5-amino-1-(5-phospho-D-ribosyl)imidazole-4-carboxylate: step 2/2. This chain is Adenylosuccinate lyase (ADE13), found in Saccharomyces cerevisiae (strain ATCC 204508 / S288c) (Baker's yeast).